We begin with the raw amino-acid sequence, 1280 residues long: Rho guanine nucleotide exchange factor 10-like protein (1280 aa).

Positions 1 to 10 (MASSNPPPQP) are enriched in pro residues. The segment at 1–94 (MASSNPPPQP…TEAPTVVSNG (94 aa)) is disordered. Over residues 26-46 (EVEEDSGEAFEFDDSDEEEDT) the composition is skewed to acidic residues. A Phosphoserine modification is found at Ser-40. Residues 78–89 (PAAAPPQTEAPT) are compositionally biased toward low complexity. Phosphotyrosine is present on residues Tyr-131 and Tyr-152. Residues 161–202 (PRETEDLGWSSSEFESYSEDSGEETKPEAEPTKHRGSFQPKL) are disordered. The segment covering 183–193 (EETKPEAEPTK) has biased composition (basic and acidic residues). Ser-279 bears the Phosphoserine mark. Residues 314–501 (VRRHILGSIV…ETLAEKLNEQ (188 aa)) form the DH domain. Disordered stretches follow at residues 1133–1163 (QEEA…HTAR) and 1186–1207 (PLLS…SEED).

In terms of assembly, interacts with RHOA, RHOB and RHOC.

The protein resides in the cytoplasm. Acts as a guanine nucleotide exchange factor (GEF) for RHOA, RHOB and RHOC. In Mus musculus (Mouse), this protein is Rho guanine nucleotide exchange factor 10-like protein (Arhgef10l).